An 86-amino-acid chain; its full sequence is Polcalcin Nic t 2 (86 aa).

EF-hand domains follow at residues 8-42 and 43-78; these read QDIA…TLGS and VTPE…NRGL. 9 residues coordinate Ca(2+): Asp21, Asn23, Asp25, Gln27, Glu32, Asp56, Asn58, Asp60, and Glu67.

The sequence is that of Polcalcin Nic t 2 (Nict2) from Nicotiana tabacum (Common tobacco).